We begin with the raw amino-acid sequence, 68 residues long: DNA-directed RNA polymerase subunit omega (68 aa).

This sequence belongs to the RNA polymerase subunit omega family. The RNAP catalytic core consists of 2 alpha, 1 beta, 1 beta' and 1 omega subunit. When a sigma factor is associated with the core the holoenzyme is formed, which can initiate transcription.

The catalysed reaction is RNA(n) + a ribonucleoside 5'-triphosphate = RNA(n+1) + diphosphate. Its function is as follows. Promotes RNA polymerase assembly. Latches the N- and C-terminal regions of the beta' subunit thereby facilitating its interaction with the beta and alpha subunits. In Persephonella marina (strain DSM 14350 / EX-H1), this protein is DNA-directed RNA polymerase subunit omega.